Reading from the N-terminus, the 189-residue chain is Chitin synthase 2 (189 aa).

This sequence belongs to the chitin synthase family. Class II subfamily.

Its subcellular location is the cell membrane. The enzyme catalyses [(1-&gt;4)-N-acetyl-beta-D-glucosaminyl](n) + UDP-N-acetyl-alpha-D-glucosamine = [(1-&gt;4)-N-acetyl-beta-D-glucosaminyl](n+1) + UDP + H(+). Its function is as follows. Polymerizes chitin, a structural polymer of the cell wall and septum, by transferring the sugar moiety of UDP-GlcNAc to the non-reducing end of the growing chitin polymer. The protein is Chitin synthase 2 (CHS2) of Exophiala exophialae (Black yeast-like fungus).